A 465-amino-acid polypeptide reads, in one-letter code: MKDVVLVKSLYRNTSEYSDKKVKISGWIRTLRASNAFGFIEVNDGSFFKNVQVVFDSAKISNYKEISKLPISSSISVIGTLVETPDSKQPFEIQAEEIIVEGMSDSDYPLQKKRHTFEYLRTIAHLRPRSNAFSATFRVRSVAAYAIHKFFQDQGFVYTHTPILTGSDCEGAGEMFRVTTLDMMAPPISEEGGIDFSQDFFGKETNLTVSGQLNAECFALAFRNIYTFGPTFRAENSNTVKHAAEFWMIEPEMAFADLIDDMEVAENMLKYVIKYVMDECPEEIAFFNQFVDKGLLERLNHVVNSEFGKVTYTEAVKLLQESGKEFEYPVEWGIDLQTEHERYLTEQIFKKPVFVTDYPKDIKAFYMRLNEDGKTVAAMDCLVPGIGEIIGGSQREERLDVLKARMAELNLNEEDYWWYLELRKYGETVHSGFGLGFERLIMYITGMANIRDVIPFPRTTGTAEF.

Belongs to the class-II aminoacyl-tRNA synthetase family. Homodimer.

It is found in the cytoplasm. The enzyme catalyses tRNA(Asn) + L-asparagine + ATP = L-asparaginyl-tRNA(Asn) + AMP + diphosphate + H(+). The polypeptide is Asparagine--tRNA ligase (Clostridium perfringens (strain SM101 / Type A)).